Here is a 304-residue protein sequence, read N- to C-terminus: PTB domain-containing engulfment adapter protein 1 (304 aa).

The residue at position 16 (T16) is a Phosphothreonine. Positions S21–L176 constitute a PID domain. Positions D159–S200 form a coiled coil. Residue S223 is modified to Phosphoserine.

It belongs to the ced-6 family. Homodimer. Interacts with clathrin and MEGF10. Interacts with GDP-bound ARF6, but not with GTP-bound ARF6. Part of a complex composed of GULP1, ACAP1 and ARF6. Interacts with ACAP1, LRP1 and STAB2. Detected throughout the brain, particularly in Purkinje cells, hippocampal and cortical neurons (at protein level).

The protein localises to the cytoplasm. Its function is as follows. Modulates cellular glycosphingolipid and cholesterol transport. May play a role in the internalization of various LRP1 ligands, such as PSAP. May function as an adapter protein. Required for efficient phagocytosis of apoptotic cells. Increases cellular levels of GTP-bound ARF6. The protein is PTB domain-containing engulfment adapter protein 1 (Gulp1) of Mus musculus (Mouse).